Here is a 547-residue protein sequence, read N- to C-terminus: Methionine--tRNA ligase (547 aa).

Positions 15 to 25 (PYANGSIHIGH) match the 'HIGH' region motif. Zn(2+) contacts are provided by Cys-146, Cys-149, Cys-159, and Cys-162. The 'KMSKS' region signature appears at 332 to 336 (KLSKS). ATP is bound at residue Lys-335.

It belongs to the class-I aminoacyl-tRNA synthetase family. MetG type 1 subfamily. As to quaternary structure, monomer. Requires Zn(2+) as cofactor.

It is found in the cytoplasm. The enzyme catalyses tRNA(Met) + L-methionine + ATP = L-methionyl-tRNA(Met) + AMP + diphosphate. In terms of biological role, is required not only for elongation of protein synthesis but also for the initiation of all mRNA translation through initiator tRNA(fMet) aminoacylation. In Buchnera aphidicola subsp. Acyrthosiphon pisum (strain APS) (Acyrthosiphon pisum symbiotic bacterium), this protein is Methionine--tRNA ligase (metG).